We begin with the raw amino-acid sequence, 134 residues long: Profilin-2 (134 aa).

A disulfide bridge links Cys-13 with Cys-118. Positions Ala-84–Thr-100 match the Involved in PIP2 interaction motif. Thr-114 bears the Phosphothreonine mark.

It belongs to the profilin family. Occurs in many kinds of cells as a complex with monomeric actin in a 1:1 ratio. Phosphorylated by MAP kinases.

It is found in the cytoplasm. It localises to the cytoskeleton. Functionally, binds to actin and affects the structure of the cytoskeleton. At high concentrations, profilin prevents the polymerization of actin, whereas it enhances it at low concentrations. The polypeptide is Profilin-2 (Olea europaea (Common olive)).